Here is a 146-residue protein sequence, read N- to C-terminus: Fluoride-specific ion channel FluC (146 aa).

The next 4 helical transmembrane spans lie at 8–28 (FAIA…TLTV), 47–67 (LANL…QALV), 91–111 (IGVL…AVFA), and 121–141 (MLLG…AAVV). 2 residues coordinate Na(+): Gly-95 and Thr-98.

This sequence belongs to the fluoride channel Fluc/FEX (TC 1.A.43) family.

Its subcellular location is the cell inner membrane. It catalyses the reaction fluoride(in) = fluoride(out). Its activity is regulated as follows. Na(+) is not transported, but it plays an essential structural role and its presence is essential for fluoride channel function. Fluoride-specific ion channel. Important for reducing fluoride concentration in the cell, thus reducing its toxicity. The chain is Fluoride-specific ion channel FluC from Rhodopirellula baltica (strain DSM 10527 / NCIMB 13988 / SH1).